A 108-amino-acid chain; its full sequence is uncharacterized protein (108 aa).

Residues 1-108 form a disordered region; sequence MAKVTSEPQK…DKEQSETSVL (108 aa). Basic residues predominate over residues 26 to 56; sequence KGRKKGKTPRQRRSRSGVKGLKTTRKAKRPL. Positions 58–70 are enriched in polar residues; the sequence is GSSSQKAGETNTP. A compositionally biased stretch (basic residues) spans 73-92; it reads KPKKARGPILRGRYHRLKEK. A compositionally biased stretch (basic and acidic residues) spans 93–108; that stretch reads MKKEEADKEQSETSVL.

This is an uncharacterized protein from Homo sapiens (Human).